The following is a 121-amino-acid chain: Large ribosomal subunit protein bL20 (121 aa).

Belongs to the bacterial ribosomal protein bL20 family.

Binds directly to 23S ribosomal RNA and is necessary for the in vitro assembly process of the 50S ribosomal subunit. It is not involved in the protein synthesizing functions of that subunit. The chain is Large ribosomal subunit protein bL20 from Wolbachia sp. subsp. Brugia malayi (strain TRS).